Consider the following 363-residue polypeptide: Sulfate/thiosulfate import ATP-binding protein CysA (363 aa).

The 235-residue stretch at 3–237 folds into the ABC transporter domain; it reads IEINNISKYF…PATRFVLEFL (235 aa). 35-42 contacts ATP; that stretch reads GPSGSGKT.

Belongs to the ABC transporter superfamily. Sulfate/tungstate importer (TC 3.A.1.6) family. As to quaternary structure, the complex is composed of two ATP-binding proteins (CysA), two transmembrane proteins (CysT and CysW) and a solute-binding protein (CysP).

Its subcellular location is the cell inner membrane. It catalyses the reaction sulfate(out) + ATP + H2O = sulfate(in) + ADP + phosphate + H(+). The enzyme catalyses thiosulfate(out) + ATP + H2O = thiosulfate(in) + ADP + phosphate + H(+). Its function is as follows. Part of the ABC transporter complex CysAWTP involved in sulfate/thiosulfate import. Responsible for energy coupling to the transport system. The sequence is that of Sulfate/thiosulfate import ATP-binding protein CysA from Yersinia pseudotuberculosis serotype I (strain IP32953).